The sequence spans 92 residues: Sec-independent protein translocase protein TatA (92 aa).

The helical transmembrane segment at 1 to 21 threads the bilayer; sequence MGIFDWKHWIVILVVVVLVFG. The interval 43-92 is disordered; the sequence is MNDDEKPADPTVTPAQPVPPVQPQATAQANPPHTIDVQAQKVEEPIRKDV. Positions 65–74 are enriched in low complexity; that stretch reads PQATAQANPP. Residues 83-92 are compositionally biased toward basic and acidic residues; sequence KVEEPIRKDV.

It belongs to the TatA/E family. In terms of assembly, the Tat system comprises two distinct complexes: a TatABC complex, containing multiple copies of TatA, TatB and TatC subunits, and a separate TatA complex, containing only TatA subunits. Substrates initially bind to the TatABC complex, which probably triggers association of the separate TatA complex to form the active translocon.

It is found in the cell inner membrane. Part of the twin-arginine translocation (Tat) system that transports large folded proteins containing a characteristic twin-arginine motif in their signal peptide across membranes. TatA could form the protein-conducting channel of the Tat system. This is Sec-independent protein translocase protein TatA from Pseudomonas fluorescens (strain Pf0-1).